The sequence spans 1035 residues: NACHT, LRR and PYD domains-containing protein 3 (1035 aa).

One can recognise a Pyrin domain in the interval 1–93 (MKMMSVRCKL…WEKAKKDQPE (93 aa)). Ser-5 carries the phosphoserine modification. The cysteines at positions 8 and 106 are disulfide-linked. Phosphotyrosine is present on Tyr-13. Cys-128 carries the S-palmitoyl cysteine lipid modification. The interval 129–132 (KKKK) is required for binding to phosphatidylinositol 4-phosphate (PtdIns4P). Residues Tyr-134 and Tyr-138 each carry the phosphotyrosine modification. In terms of domain architecture, FISNA spans 138–208 (YRRHVRSRFY…SSLKLELLFE (71 aa)). Phosphoserine is present on Ser-159. Tyr-166 bears the Phosphotyrosine mark. An ATP-binding site is contributed by Thr-167. Position 199 is a phosphoserine (Ser-199). The NACHT domain occupies 218-534 (HTVVFQGAAG…EFFAAMYYLL (317 aa)). An ATP-binding site is contributed by 224-231 (GAAGIGKT). Phosphoserine occurs at positions 263 and 293. Lys-322 participates in a covalent cross-link: Glycyl lysine isopeptide (Lys-Gly) (interchain with G-Cter in ubiquitin). At Ser-332 the chain carries Phosphoserine. The KFERQ-like motif 1 motif lies at 353–357 (LEKLQ). A Glycyl lysine isopeptide (Lys-Gly) (interchain with G-Cter in ubiquitin) cross-link involves residue Lys-428. His-520 is an ATP binding site. The KFERQ-like motif 2 motif lies at 603-607 (QVRLE). Lys-689 is covalently cross-linked (Glycyl lysine isopeptide (Lys-Gly) (interchain with G-Cter in ubiquitin)). Ser-727 and Ser-734 each carry phosphoserine. LRR repeat units follow at residues 741–761 (SLTE…RVLC), 770–791 (NIQR…NISS), 798–818 (KLVE…RLLC), 827–848 (NLQK…DLAL), and 855–875 (SLTR…QVLC). A KFERQ-like motif 3 motif is present at residues 797 to 801 (QKLVE). Ser-805 is subject to Phosphoserine. S-palmitoyl cysteine attachment occurs at residues Cys-836, Cys-837, and Cys-843. Tyr-860 carries the post-translational modification Phosphotyrosine. Residue Lys-877 forms a Glycyl lysine isopeptide (Lys-Gly) (interchain with G-Cter in ubiquitin) linkage. 4 LRR repeats span residues 884–905 (NLQK…ALTS), 912–932 (NLTH…KLLC), 941–962 (KLQM…DLST), and 969–990 (SLRK…TLCE). Cys-957 carries the S-palmitoyl cysteine lipid modification. Lys-972 participates in a covalent cross-link: Glycyl lysine isopeptide (Lys-Gly) (interchain with G-Cter in ubiquitin). Positions 990–994 (EVLKQ) match the KFERQ-like motif 4 motif. Ser-1034 bears the Phosphoserine mark.

It belongs to the NLRP family. As to quaternary structure, sensor component of NLRP3 inflammasomes; inflammasomes are supramolecular complexes that assemble in the cytosol in response to pathogens and other damage-associated signals and play critical roles in innate immunity and inflammation. The core of NLRP3 inflammasomes consists of a signal sensor component (NLRP3), an adapter (PYCARD/ASC), which recruits an effector pro-inflammatory caspase (CASP1 and, possibly, CASP4 and CASP5). Homodecamer; inactive NLRP3 forms homodecameric double-ring cages that hide pyrin domains within NACHT-LRR rings to avoid premature activation. Interacts (via pyrin domain) with PYCARD/ASC (via pyrin domain); interaction is direct. Interacts (via LRR repeat domain) with NEK7 (via N-terminus); the interaction is required for the formation of the complex NLRP3:PYCARD, oligomerization of PYCARD/ASC and activation of CASP1. Interacts (via LRR repeat domain) with NR4A1/Nur77 (via N-terminus); the interaction is direct, requires activation of NR4A1 by its ligands NBRE-containing dsDNA and lipopolysaccharide, and stimulates the association of NLRP3 with NEK7 for non-canonical NLRP3 inflammasome activation. Interacts with CARD8; leading to inhibit formation of the NLRP3 inflammasome. Interacts with MEFV; this interaction targets NLRP3 to degradation by autophagy, hence preventing excessive IL1B- and IL18-mediated inflammation. Interacts with EIF2AK2/PKR; this interaction requires EIF2AK2 activity, is accompanied by EIF2AK2 autophosphorylation and promotes inflammasome assembly in response to specific stimuli. Interacts with GBP5 (via DAPIN domain); this interaction promotes inflammasome assembly in response to microbial and soluble, but not crystalline, agents. Interacts with PML (isoform PML-1) (via the leucine-rich repeat (LRR) domain); PML-mediated increase in NLRP3 inflammasome activation does not depend upon this interaction. Interacts (via NACHT domain) with DHX33 (via DEAH box); NLRP3 activation in presence of cytosolic dsRNA is mediated by DHX33. Interacts (via NACHT and LRR domains) with ARRB2; this interaction is direct and inducible by polyunsaturated fatty acids (PUFAs). Interacts (via NACHT domain) with DDX3X under both LPS-primed and inflammasome-activating conditions. Interacts with IRF4 (via the LRR domain); this interaction is direct and is required for optimal IRF4 binding to IL4 promoter and efficient IL4 transactivation during differentiation of Th2 helper T-cells. Interacts with MAVS; promoting localization to mitochondria and activation of the NLRP3 inflammasome. Interacts with MARK4; promoting localization of NLRP3 to the microtubule organizing center (MTOC). Interacts with TRIM50; this interaction also promotes NLRP3 oligomerization and subsequent inflammasome activation. Interacts with IRGM; preventing NLRP3 inflammasome assembly and promoting NLRP3 degradation. Interacts (via NACHT and LLR domains) with ABHD8; this interaction is enhanced in the presence of NLRP3 inflammasome inducers, such as ATP, nigericin, silica, or alum. Interaction with ABHD8 leads the recruitment of ZDHHC12, hence facilitating NLRP3 palmitoylation and degradation by the chaperone-mediated autophagy pathway (CMA), therefore attenuating NLRP3 inflammasome activation. Phosphorylation by MAPK8/JNK1 increases inflammasome activation by promoting deubiquitination by BRCC3 and NLRP3 homooligomerization. Phosphorylation at Ser-805 by CSNK1A1 prevents inflammasome activation by preventing NEK7 recruitment. Phosphorylation at Ser-5 in the pyrin domain inhibits homomultimerization of NLRP3 and activation of the NLRP3 inflammasome: dephosphorylation by protein phosphatase 2A (PP2A) promotes assembly of the NLRP3 inflammasome. Phosphorylation at Ser-293 by PKD/PRKD1 promotes NLRP3 inflammasome assembly. Phosphorylation by ERK1/MAPK3 promotes NLRP3 inflammasome assembly. Phosphorylation by BTK (at Tyr-134, Tyr-138 and Tyr-166) in the region that mediates binding to phosphatidylinositol phosphate, promotes relocalization of NLRP3 and assembly of the NLRP3 inflammasome. Phosphorylation at Tyr-860 inhibits NLRP3 inflammasome assembly: dephosphorylation by PTPN22 promotes inflammasome activation. Phosphorylated by LATS1 and LATS2 at Ser-263 following palmitoylation by ZDHHC1, promoting its relocalization to the microtubule organizing center (MTOC), where NLRP3 is activated by NEK7, leading to inflammasome assembly and activation. In terms of processing, ubiquitinated; undergoes both 'Lys-48'- and 'Lys-63'-linked polyubiquitination. Ubiquitination does not lead to degradation, but inhibits inflammasome activation. Deubiquitination is catalyzed by BRCC3 and associated with NLRP3 activation and inflammasome assembly. This process can be induced by the activation of Toll-like receptors (by LPS), through a non-transcriptional pathway dependent on the mitochondrial production of reactive oxygen species, and by ATP. Ubiquitinated by TRIM31 via 'Lys-48'-linked ubiquitination, leading to its degradation by the proteasome. Ubiquitinated at Lys-689 by the SCF(FBXL2) complex, leading to its degradation by the proteasome. Ubiquitinated by TRIM35 via 'lys-48' and 'Lys-63'-linked ubiquitination leading to inhibition of NLRP3 inflammasome activation. Undergoes 'Lys-27'-linked polyubiquitination by MARCHF5, leading to NLRP3-NEK7 complex formation and NLRP3 oligomerization. Post-translationally, the disulfide bond in the pyrin domain might play a role in reactive oxygen species-mediated activation. Palmitoylation by ZDHHC12 promotes NLRP3 degradation by the chaperone-mediated autophagy pathway (CMA) and therefore limits NLRP3 inflammasome activation. Interaction with ZDHHC12, and hence NLRP3 palmitoylation, is greatly enhanced by ABHD8. Following palmitoylation, HSPA8/HSC70 recognizes and binds the KFERQ-like motifs on NLRP3 and promotes NLRP3 recruitment to lysosomes, where it is degraded via the chaperone-mediated autophagy pathway in a LAMP2-dependent process. Palmitoylation at Cys-836 and Cys-837 by ZDHHC5 enhances its binding to NEK7 leading to inflammasome assembly and activation. Palmitoylation at Cys-128 and Cys-957 by ZDHHC1 facilitates phosphorylation at Ser-263 by LATS1 and LATS2, promoting its relocalization to the microtubule organizing center (MTOC), where NLRP3 is activated by NEK7, leading to inflammasome assembly and activation. Depalmitoylated by ABHD17A. In terms of processing, degraded via selective autophagy following interaction with IRGM. IRGM promotes NLRP3 recruitment to autophagosome membranes, promoting its SQSTM1/p62-dependent autophagy-dependent degradation.

The protein resides in the cytoplasm. The protein localises to the cytosol. It is found in the inflammasome. It localises to the cytoskeleton. Its subcellular location is the microtubule organizing center. The protein resides in the golgi apparatus membrane. The protein localises to the endoplasmic reticulum. It is found in the mitochondrion. It localises to the secreted. Its subcellular location is the nucleus. The catalysed reaction is ATP + H2O = ADP + phosphate + H(+). Its activity is regulated as follows. Under resting conditions, NLRP3 binds ADP and is autoinhibited. Inactive NLRP3 forms homodecameric double-ring cages that hide pyrin domains within NACHT-LRR rings to avoid premature activation. NLRP3 activation stimuli include extracellular ATP, nigericin, reactive oxygen species, crystals of monosodium urate or cholesterol, amyloid-beta fibers, environmental or industrial particles and nanoparticles, such as asbestos, silica, aluminum salts, cytosolic dsRNA, etc. Almost all stimuli trigger intracellular K(+) efflux. These stimuli lead to membrane perturbations that induce activation of NLRP3. Upon activation, NLRP3 is transported to microtubule organizing center (MTOC), where it is unlocked by NEK7, leading to its relocalization to dispersed trans-Golgi network (dTGN) vesicle membranes and recruitment of PYCARD/ASC for the formation of an active inflammasome complex. NEK7-activated NLRP3 forms a disk-shaped inflammasome. NLRP3 and PYCARD/ASC interact via their respective pyrin domains; interaction initiates speck formation (nucleation) which greatly enhances further addition of soluble PYCARD/ASC molecules to the speck in a prion-like polymerization process. Clustered PYCARD/ASC nucleates the formation of CASP1 filaments through the interaction of their respective CARD domains, acting as a platform for CASP1 polymerization and activation. Active CASP1 then processes IL1B and IL18 precursors, leading to the release of mature cytokines in the extracellular milieu and inflammatory response. NLRP3 inflammasome assembly is inhibited by IRGM, which impedes NLRP3 oligomerization. NLRP3 inflammasome is inhibited by cyclic AMP (cAMP), which directly binds NLRP3; inhibition is relieved by calcium-sensing receptor CASR, which inhibits production of cAMP. Specifically inhibited by sulfonylurea MCC950 (also named CP-456,773, CRID3), a potent and specific small-molecule inhibitor of the NLRP3 inflammasome that acts by preventing ATP hydrolysis. Sensor component of the NLRP3 inflammasome, which mediates inflammasome activation in response to defects in membrane integrity, leading to secretion of inflammatory cytokines IL1B and IL18 and pyroptosis. In response to pathogens and other damage-associated signals that affect the integrity of membranes, initiates the formation of the inflammasome polymeric complex composed of NLRP3, CASP1 and PYCARD/ASC. Recruitment of pro-caspase-1 (proCASP1) to the NLRP3 inflammasome promotes caspase-1 (CASP1) activation, which subsequently cleaves and activates inflammatory cytokines IL1B and IL18 and gasdermin-D (GSDMD), promoting cytokine secretion and pyroptosis. Activation of NLRP3 inflammasome is also required for HMGB1 secretion; stimulating inflammatory responses. Under resting conditions, ADP-bound NLRP3 is autoinhibited. NLRP3 activation stimuli include extracellular ATP, nigericin, reactive oxygen species, crystals of monosodium urate or cholesterol, amyloid-beta fibers, environmental or industrial particles and nanoparticles, such as asbestos, silica, aluminum salts, cytosolic dsRNA, etc. Almost all stimuli trigger intracellular K(+) efflux. These stimuli lead to membrane perturbation and activation of NLRP3. Upon activation, NLRP3 is transported to microtubule organizing center (MTOC), where it is unlocked by NEK7, leading to its relocalization to dispersed trans-Golgi network (dTGN) vesicle membranes and formation of an active inflammasome complex. Associates with dTGN vesicle membranes by binding to phosphatidylinositol 4-phosphate (PtdIns4P). Shows ATPase activity. Functionally, independently of inflammasome activation, regulates the differentiation of T helper 2 (Th2) cells and has a role in Th2 cell-dependent asthma and tumor growth. During Th2 differentiation, required for optimal IRF4 binding to IL4 promoter and for IRF4-dependent IL4 transcription. Binds to the consensus DNA sequence 5'-GRRGGNRGAG-3'. May also participate in the transcription of IL5, IL13, GATA3, CCR3, CCR4 and MAF. The chain is NACHT, LRR and PYD domains-containing protein 3 from Rattus norvegicus (Rat).